The chain runs to 906 residues: Disintegrin and metalloproteinase domain-containing protein 22 (906 aa).

The N-terminal stretch at 1–25 (MQAAVAVSVPFLLLCVLGTCPPARC) is a signal peptide. A propeptide spanning residues 26–222 (GQAGDASLME…KFILKPRPKR (197 aa)) is cleaved from the precursor. Asn-175 is a glycosylation site (N-linked (GlcNAc...) asparagine). Topologically, residues 223 to 736 (SKRQLRRYPR…LSGNGVAGTN (514 aa)) are extracellular. One can recognise a Peptidase M12B domain in the interval 239–438 (KYIELMIVND…GGGACLFNKP (200 aa)). 17 disulfide bridges follow: Cys-349/Cys-433, Cys-392/Cys-417, Cys-394/Cys-401, Cys-447/Cys-477, Cys-458/Cys-474, Cys-460/Cys-466, Cys-473/Cys-494, Cys-485/Cys-491, Cys-490/Cys-516, Cys-503/Cys-523, Cys-510/Cys-542, Cys-535/Cys-547, Cys-554/Cys-605, Cys-569/Cys-635, Cys-583/Cys-593, Cys-600/Cys-663, and Cys-657/Cys-668. The region spanning 444–531 (PPECGNGFIE…QCAPNIHKMD (88 aa)) is the Disintegrin domain. N-linked (GlcNAc...) asparagine glycosylation occurs at Asn-519. A glycan (N-linked (GlcNAc...) asparagine) is linked at Asn-634. Asn-675 carries an N-linked (GlcNAc...) asparagine glycan. The region spanning 675–712 (NFSTCLSSKEGTICSGNGVCSNELKCVCNRHWIGSDCN) is the EGF-like domain. 3 disulfides stabilise this stretch: Cys-679–Cys-694, Cys-688–Cys-700, and Cys-702–Cys-711. Residues 737–757 (IIIGIIAGTILVLALILGITA) form a helical membrane-spanning segment. The Cytoplasmic segment spans residues 758–906 (WGYKNYREQR…QSARLWETSI (149 aa)). Positions 785-906 (YSDIPPGVST…QSARLWETSI (122 aa)) are disordered. A compositionally biased stretch (low complexity) spans 793-810 (STNSASSSKKRSNGLSHS). A Phosphoserine modification is found at Ser-810. Residues 811-829 (WSERIPDTKHISDICENGR) show a composition bias toward basic and acidic residues. Ser-834 bears the Phosphoserine mark. Residues 842-853 (NKKKIRGKRFRP) are compositionally biased toward basic residues. A phosphoserine mark is found at Ser-857, Ser-862, Ser-866, and Ser-870. The segment covering 862–877 (SPAKSPSSSTGSIASS) has biased composition (low complexity).

Interacts with LGI1. Interacts with DLG4/PSD95. Also binds LGI4. Interacts with KCNA2 and DLG2. Interacts with ADAM11. Interacts (via C-terminus) with YWHAB/14-3-3 beta. Interacts (via C-terminus) with YWHAZ/14-3-3 zeta. In terms of processing, the precursor is cleaved by a furin endopeptidase. Highly expressed in the brain and in some high-grade but not low-grade gliomas. Detected slightly or not at all in other tissues.

It is found in the cell membrane. It localises to the cell projection. Its subcellular location is the axon. In terms of biological role, probable ligand for integrin in the brain. This is a non catalytic metalloprotease-like protein. Involved in regulation of cell adhesion and spreading and in inhibition of cell proliferation. Neuronal receptor for LGI1. This chain is Disintegrin and metalloproteinase domain-containing protein 22 (ADAM22), found in Homo sapiens (Human).